The following is a 530-amino-acid chain: Bifunctional purine biosynthesis protein PurH (530 aa).

Positions 1–148 (MNNARPIRRA…KNHKDVTIVV (148 aa)) constitute an MGS-like domain.

It belongs to the PurH family.

The enzyme catalyses (6R)-10-formyltetrahydrofolate + 5-amino-1-(5-phospho-beta-D-ribosyl)imidazole-4-carboxamide = 5-formamido-1-(5-phospho-D-ribosyl)imidazole-4-carboxamide + (6S)-5,6,7,8-tetrahydrofolate. It catalyses the reaction IMP + H2O = 5-formamido-1-(5-phospho-D-ribosyl)imidazole-4-carboxamide. It participates in purine metabolism; IMP biosynthesis via de novo pathway; 5-formamido-1-(5-phospho-D-ribosyl)imidazole-4-carboxamide from 5-amino-1-(5-phospho-D-ribosyl)imidazole-4-carboxamide (10-formyl THF route): step 1/1. Its pathway is purine metabolism; IMP biosynthesis via de novo pathway; IMP from 5-formamido-1-(5-phospho-D-ribosyl)imidazole-4-carboxamide: step 1/1. The protein is Bifunctional purine biosynthesis protein PurH of Vibrio parahaemolyticus serotype O3:K6 (strain RIMD 2210633).